The sequence spans 427 residues: Large ribosomal subunit protein uL4 (427 aa).

At A2 the chain carries N-acetylalanine. K14 carries the N6-acetyllysine modification. R97 carries the post-translational modification Omega-N-methylarginine. The residue at position 106 (K106) is an N6-acetyllysine. K239 participates in a covalent cross-link: Glycyl lysine isopeptide (Lys-Gly) (interchain with G-Cter in SUMO2). N6-acetyllysine is present on K259. The residue at position 266 (T266) is a Phosphothreonine. Phosphoserine is present on residues S290 and S295. R300 bears the Citrulline mark. K327 participates in a covalent cross-link: Glycyl lysine isopeptide (Lys-Gly) (interchain with G-Cter in SUMO2). N6-acetyllysine occurs at positions 333 and 353. K364 is subject to N6-acetyllysine; alternate. Residue K364 forms a Glycyl lysine isopeptide (Lys-Gly) (interchain with G-Cter in SUMO1); alternate linkage. Phosphoserine is present on S365. The segment at 369–427 is disordered; the sequence is AAVAGKKPVVGKKGKKAAVGVKKQKKPLVGKKAAATKKPAPEKKPAEKKPTTEEKKPAA. Residues 377–397 show a composition bias toward basic residues; the sequence is VVGKKGKKAAVGVKKQKKPLV. Positions 407-427 are enriched in basic and acidic residues; that stretch reads PAPEKKPAEKKPTTEEKKPAA.

The protein belongs to the universal ribosomal protein uL4 family. In terms of assembly, component of the large ribosomal subunit. May bind IPO9 with low affinity. Interacts with RBM3. Citrullinated by PADI4.

It is found in the cytoplasm. Component of the large ribosomal subunit. The ribosome is a large ribonucleoprotein complex responsible for the synthesis of proteins in the cell. In Pongo abelii (Sumatran orangutan), this protein is Large ribosomal subunit protein uL4 (RPL4).